Reading from the N-terminus, the 216-residue chain is Protein shisa-5 (216 aa).

Residues 1–26 (MAAPAPAPRILVLLLLLLPAPEGAQS) form the signal peptide. Residues 27–93 (ELCMISHGRK…SGFDSDPVAR (67 aa)) lie on the Extracellular side of the membrane. The helical transmembrane segment at 94–114 (FGTVIAIGVTLFVIAVVTVIV) threads the bilayer. Topologically, residues 115 to 216 (CCTCSCCCLY…AYMEPPKAVP (102 aa)) are cytoplasmic.

The protein belongs to the shisa family. In terms of assembly, interacts with PDCD6; PDCD6 can stabilize SHISA5.

The protein resides in the endoplasmic reticulum membrane. Its subcellular location is the nucleus membrane. Functionally, can induce apoptosis in a caspase-dependent manner and plays a role in p53/TP53-dependent apoptosis. This Bos taurus (Bovine) protein is Protein shisa-5 (SHISA5).